A 376-amino-acid chain; its full sequence is Carbamoyl phosphate synthase small chain (376 aa).

Residues 1–187 (MKALLVLEDG…AEDGSYAWRG (187 aa)) form a CPSase region. Residues Ser45, Gly239, and Gly241 each coordinate L-glutamine. One can recognise a Glutamine amidotransferase type-1 domain in the interval 191–376 (PLLVYDFGIK…RKIIGESAGA (186 aa)). The Nucleophile role is filled by Cys266. L-glutamine is bound by residues Leu267, Gln270, Asn308, Gly310, and Phe311. Active-site residues include His349 and Glu351.

It belongs to the CarA family. In terms of assembly, composed of two chains; the small (or glutamine) chain promotes the hydrolysis of glutamine to ammonia, which is used by the large (or ammonia) chain to synthesize carbamoyl phosphate. Tetramer of heterodimers (alpha,beta)4.

The catalysed reaction is hydrogencarbonate + L-glutamine + 2 ATP + H2O = carbamoyl phosphate + L-glutamate + 2 ADP + phosphate + 2 H(+). It carries out the reaction L-glutamine + H2O = L-glutamate + NH4(+). It participates in amino-acid biosynthesis; L-arginine biosynthesis; carbamoyl phosphate from bicarbonate: step 1/1. The protein operates within pyrimidine metabolism; UMP biosynthesis via de novo pathway; (S)-dihydroorotate from bicarbonate: step 1/3. In terms of biological role, small subunit of the glutamine-dependent carbamoyl phosphate synthetase (CPSase). CPSase catalyzes the formation of carbamoyl phosphate from the ammonia moiety of glutamine, carbonate, and phosphate donated by ATP, constituting the first step of 2 biosynthetic pathways, one leading to arginine and/or urea and the other to pyrimidine nucleotides. The small subunit (glutamine amidotransferase) binds and cleaves glutamine to supply the large subunit with the substrate ammonia. The polypeptide is Carbamoyl phosphate synthase small chain (Desulfovibrio desulfuricans (strain ATCC 27774 / DSM 6949 / MB)).